A 159-amino-acid chain; its full sequence is Small ribosomal subunit protein uS9 (159 aa).

The protein belongs to the universal ribosomal protein uS9 family.

In Beijerinckia indica subsp. indica (strain ATCC 9039 / DSM 1715 / NCIMB 8712), this protein is Small ribosomal subunit protein uS9.